The chain runs to 131 residues: Interleukin-13 (131 aa).

An N-terminal signal peptide occupies residues 1–18; that stretch reads MALWVTAVLALACLGGLA. N-linked (GlcNAc...) asparagine glycans are attached at residues asparagine 42, asparagine 53, asparagine 76, and asparagine 121. 2 disulfide bridges follow: cysteine 52–cysteine 80 and cysteine 68–cysteine 94.

The protein belongs to the IL-4/IL-13 family. Interacts with IL13RA2.

It localises to the secreted. Its function is as follows. Cytokine that plays important roles in allergic inflammation and immune response to parasite infection. Synergizes with IL2 in regulating interferon-gamma synthesis. Stimulates B-cell proliferation, and activation of eosinophils, basophils, and mast cells. Plays an important role in controlling IL33 activity by modulating the production of transmembrane and soluble forms of interleukin-1 receptor-like 1/IL1RL1. Displays the capacity to antagonize Th1-driven proinflammatory immune response and downregulates synthesis of many proinflammatory cytokines including IL1, IL6, IL10, IL12 and TNF-alpha through a mechanism that partially involves suppression of NF-kappa-B. Also functions on nonhematopoietic cells, including endothelial cells where it induces vascular cell adhesion protein 1/VCAM1, which is important in the recruitment of eosinophils. Exerts its biological effects through its receptors which comprises the IL4R chain and the IL13RA1 chain, to activate JAK1 and TYK2, leading to the activation of STAT6. Aside from IL13RA1, another receptor IL13RA2 acts as a high affinity decoy for IL13 and mediates internalization and depletion of extracellular IL13. The protein is Interleukin-13 (Il13) of Rattus norvegicus (Rat).